The chain runs to 103 residues: Small ribosomal subunit protein uS10 (103 aa).

Belongs to the universal ribosomal protein uS10 family. As to quaternary structure, part of the 30S ribosomal subunit.

In terms of biological role, involved in the binding of tRNA to the ribosomes. In Chlorobaculum tepidum (strain ATCC 49652 / DSM 12025 / NBRC 103806 / TLS) (Chlorobium tepidum), this protein is Small ribosomal subunit protein uS10.